Reading from the N-terminus, the 197-residue chain is Lymphotoxin-alpha (197 aa).

Positions 1 to 26 (MTPPGRLYLPLLLGLLLAPPPPGAQG) are cleaved as a signal peptide. One can recognise a THD domain in the interval 55-197 (PAAHLVGDPS…SSVFFGAFAL (143 aa)). The N-linked (GlcNAc...) asparagine glycan is linked to asparagine 88. The cysteines at positions 112 and 148 are disulfide-linked.

This sequence belongs to the tumor necrosis factor family. In terms of assembly, homotrimer, and heterotrimer of either two LTB and one LTA subunits or (less prevalent) two LTA and one LTB subunits. Interacts with TNFRSF14.

It is found in the secreted. Its subcellular location is the membrane. In terms of biological role, cytokine that in its homotrimeric form binds to TNFRSF1A/TNFR1, TNFRSF1B/TNFBR and TNFRSF14/HVEM. In its heterotrimeric form with LTB binds to TNFRSF3/LTBR. Lymphotoxin is produced by lymphocytes and is cytotoxic for a wide range of tumor cells in vitro and in vivo. This is Lymphotoxin-alpha (LTA) from Oryctolagus cuniculus (Rabbit).